The sequence spans 79 residues: Small ribosomal subunit protein bS18 (79 aa).

This sequence belongs to the bacterial ribosomal protein bS18 family. In terms of assembly, part of the 30S ribosomal subunit. Forms a tight heterodimer with protein bS6.

In terms of biological role, binds as a heterodimer with protein bS6 to the central domain of the 16S rRNA, where it helps stabilize the platform of the 30S subunit. This Bradyrhizobium sp. (strain BTAi1 / ATCC BAA-1182) protein is Small ribosomal subunit protein bS18.